The sequence spans 288 residues: Proteasome subunit beta (288 aa).

Positions 1–57 (MTAGDPMRLHPGHALSSFTEHLRALAPELLGPNRFAALDGATGSSGGTGAKDIAPHG) are cleaved as a propeptide — removed in mature form; by autocatalysis. Residue threonine 58 is the Nucleophile of the active site.

It belongs to the peptidase T1B family. As to quaternary structure, the 20S proteasome core is composed of 14 alpha and 14 beta subunits that assemble into four stacked heptameric rings, resulting in a barrel-shaped structure. The two inner rings, each composed of seven catalytic beta subunits, are sandwiched by two outer rings, each composed of seven alpha subunits. The catalytic chamber with the active sites is on the inside of the barrel. Has a gated structure, the ends of the cylinder being occluded by the N-termini of the alpha-subunits. Is capped by the proteasome-associated ATPase, ARC.

It localises to the cytoplasm. The catalysed reaction is Cleavage of peptide bonds with very broad specificity.. Its pathway is protein degradation; proteasomal Pup-dependent pathway. Its activity is regulated as follows. The formation of the proteasomal ATPase ARC-20S proteasome complex, likely via the docking of the C-termini of ARC into the intersubunit pockets in the alpha-rings, may trigger opening of the gate for substrate entry. Interconversion between the open-gate and close-gate conformations leads to a dynamic regulation of the 20S proteasome proteolysis activity. In terms of biological role, component of the proteasome core, a large protease complex with broad specificity involved in protein degradation. The sequence is that of Proteasome subunit beta from Nocardia farcinica (strain IFM 10152).